Reading from the N-terminus, the 170-residue chain is Cathelicidin antimicrobial peptide (170 aa).

The first 30 residues, 1 to 30 (MKTQMDGHSLGRWSLVLLLLGLVMPLAIVA), serve as a signal peptide directing secretion. The propeptide at 31–131 (QVLSYKEAVL…DISCDKDNRR (101 aa)) is cathelin-like domain (CLD). Disulfide bonds link Cys-86-Cys-97 and Cys-108-Cys-125. The tract at residues 150 to 162 (FKRIVQRIKDFLR) is active core.

It belongs to the cathelicidin family. As to quaternary structure, monomer, homodimer or homotrimer (in vitro). Oligomerizes as tetra- or hexamer in solution (in vitro). Proteolytically cleaved by proteinase PRTN3 into antibacterial peptide LL-37. Proteolytically cleaved by cathepsin CTSG and neutrophil elastase ELANE. Post-translationally, resistant to proteolytic degradation in solution, and when bound to both zwitterionic (mimicking mammalian membranes) and negatively charged membranes (mimicking bacterial membranes). In terms of processing, after secretion onto the skin surface, the CAMP gene product is processed by a serine protease-dependent mechanism into multiple novel antimicrobial peptides distinct from and shorter than cathelicidin LL-37. These peptides show enhanced antimicrobial action, acquiring the ability to kill skin pathogens such as S.aureus, E.coli and C.albicans. These peptides have lost the ability to stimulate CXCL8/IL8 release from keratinocytes. The peptides act synergistically, killing bacteria at lower concentrations when present together, and maintain activity at increased salt condition.

Its subcellular location is the secreted. The protein resides in the vesicle. Functionally, antimicrobial protein that is an integral component of the innate immune system. Binds to bacterial lipopolysaccharides (LPS). Acts via neutrophil N-formyl peptide receptors to enhance the release of CXCL2. Postsecretory processing generates multiple cathelicidin antimicrobial peptides with various lengths which act as a topical antimicrobial defense in sweat on skin. The unprocessed precursor form, cathelicidin antimicrobial peptide, inhibits the growth of Gram-negative E.coli and E.aerogenes with efficiencies comparable to that of the mature peptide LL-37 (in vitro). Its function is as follows. Antimicrobial peptide that is an integral component of the innate immune system. Binds to bacterial lipopolysaccharides (LPS). Causes membrane permeabilization by forming transmembrane pores (in vitro). Causes lysis of E.coli. Exhibits antimicrobial activity against Gram-negative bacteria such as P.aeruginosa, S.typhimurium, E.aerogenes, E.coli and P.syringae, Gram-positive bacteria such as L.monocytogenes, S.epidermidis, S.pyogenes and S.aureus, as well as vancomycin-resistant enterococci (in vitro). Exhibits antimicrobial activity against methicillin-resistant S.aureus, P.mirabilis, and C.albicans in low-salt media, but not in media containing 100 mM NaCl (in vitro). Forms chiral supramolecular assemblies with quinolone signal (PQS) molecules of P.aeruginosa, which may lead to interference of bacterial quorum signaling and perturbance of bacterial biofilm formation. May form supramolecular fiber-like assemblies on bacterial membranes. Induces cytokine and chemokine producation as well as TNF/TNFA and CSF2/GMCSF production in normal human keratinocytes. Exhibits hemolytic activity against red blood cells. In terms of biological role, exhibits antimicrobial activity against E.coli and B.megaterium (in vitro). In Pongo pygmaeus (Bornean orangutan), this protein is Cathelicidin antimicrobial peptide.